Here is a 466-residue protein sequence, read N- to C-terminus: 3-isopropylmalate dehydratase large subunit (466 aa).

Cysteine 347, cysteine 407, and cysteine 410 together coordinate [4Fe-4S] cluster.

The protein belongs to the aconitase/IPM isomerase family. LeuC type 1 subfamily. In terms of assembly, heterodimer of LeuC and LeuD. It depends on [4Fe-4S] cluster as a cofactor.

The catalysed reaction is (2R,3S)-3-isopropylmalate = (2S)-2-isopropylmalate. It functions in the pathway amino-acid biosynthesis; L-leucine biosynthesis; L-leucine from 3-methyl-2-oxobutanoate: step 2/4. In terms of biological role, catalyzes the isomerization between 2-isopropylmalate and 3-isopropylmalate, via the formation of 2-isopropylmaleate. This Cronobacter sakazakii (strain ATCC BAA-894) (Enterobacter sakazakii) protein is 3-isopropylmalate dehydratase large subunit.